We begin with the raw amino-acid sequence, 443 residues long: MTAKAPRVGMISLGCPKALVDSERILTQLRMEGYEVVATYEDADVVVVNTCGFIDTAKAESLEVIGEAIKENGKVIVTGCMGVDASVIRAVHPSVLSVTGPQQYEQVVNAVHDVVPPRKDHNPLIDLVPPQGVKLTPRHYAYLKISEGCNHSCSFCIIPSMRGKLVSRPVGDVLDEAKRLVKSGVKELLVISQDTSAYGVDVKYRTGFWDGQPVKTRMTELCQALGSMGVWVRLHYVYPYPHVDELIPLMAAGKILPYLDIPFQHASPKILKLMKRPAFEDKTLARIKNWREQCPDLIIRSTFIVGFPGETEEDFQYLLDWLTEAQLDRVGCFQYSPVEGAPANLLDAAIVPDDVKQDRWDRFMAHQQAISAARLQMKIGKEIEVLIDEVDDRGAVGRCFFDAPEIDGNVFIGLEDGSTVQPGDKIMCRVTDADEYDLWAEML.

Positions 6 to 116 constitute an MTTase N-terminal domain; sequence PRVGMISLGC…VVNAVHDVVP (111 aa). Positions 15, 51, 80, 149, 153, and 156 each coordinate [4Fe-4S] cluster. Positions 135-373 constitute a Radical SAM core domain; that stretch reads LTPRHYAYLK…MAHQQAISAA (239 aa). The region spanning 376-443 is the TRAM domain; sequence QMKIGKEIEV…DEYDLWAEML (68 aa).

The protein belongs to the methylthiotransferase family. RimO subfamily. [4Fe-4S] cluster is required as a cofactor.

It is found in the cytoplasm. It catalyses the reaction L-aspartate(89)-[ribosomal protein uS12]-hydrogen + (sulfur carrier)-SH + AH2 + 2 S-adenosyl-L-methionine = 3-methylsulfanyl-L-aspartate(89)-[ribosomal protein uS12]-hydrogen + (sulfur carrier)-H + 5'-deoxyadenosine + L-methionine + A + S-adenosyl-L-homocysteine + 2 H(+). Its function is as follows. Catalyzes the methylthiolation of an aspartic acid residue of ribosomal protein uS12. This is Ribosomal protein uS12 methylthiotransferase RimO from Pseudomonas syringae pv. tomato (strain ATCC BAA-871 / DC3000).